Here is a 109-residue protein sequence, read N- to C-terminus: Large ribosomal subunit protein uL24 (109 aa).

This sequence belongs to the universal ribosomal protein uL24 family. As to quaternary structure, part of the 50S ribosomal subunit.

Functionally, one of two assembly initiator proteins, it binds directly to the 5'-end of the 23S rRNA, where it nucleates assembly of the 50S subunit. Its function is as follows. One of the proteins that surrounds the polypeptide exit tunnel on the outside of the subunit. In Rickettsia rickettsii (strain Iowa), this protein is Large ribosomal subunit protein uL24.